Here is a 230-residue protein sequence, read N- to C-terminus: Capsid protein (230 aa).

Residues 19–48 (PPTSDAASPSADQPAVSSSRSDSRLVSAPL) show a composition bias toward low complexity. The interval 19-54 (PPTSDAASPSADQPAVSSSRSDSRLVSAPLPAAPPA) is disordered.

It belongs to the tymoviruses capsid protein family.

Its subcellular location is the virion. In terms of biological role, self-assembles to form a T=3 icosahedral capsid composed of 180 copies of the capsid protein. The capsid encapsulates the single-stranded RNA genome. In Grapevine fleck virus (isolate Italy/MT48) (GFkV), this protein is Capsid protein.